A 69-amino-acid polypeptide reads, in one-letter code: Cell division protein CrgA (69 aa).

The next 2 helical transmembrane spans lie at 14–34 and 45–65; these read VWFP…MVLF and AVGT…FAMM.

This sequence belongs to the CrgA family.

The protein resides in the cell membrane. Functionally, involved in cell division. In Tropheryma whipplei (strain TW08/27) (Whipple's bacillus), this protein is Cell division protein CrgA.